The following is a 924-amino-acid chain: Ubiquitin carboxyl-terminal hydrolase 15 (924 aa).

Residues Cys-130, Cys-133, Cys-141, Cys-144, Cys-150, Cys-154, His-163, and Cys-167 each coordinate Zn(2+). An MYND-type zinc finger spans residues 130-167 (CARCFGPAKTRCSRCKSVRYCSGKCQIIHWRVAHKDEC). A compositionally biased stretch (polar residues) spans 226–236 (DITPQINTQGR). Disordered regions lie at residues 226–301 (DITP…VDSS) and 317–366 (SHKH…TSKK). A compositionally biased stretch (basic and acidic residues) spans 247 to 256 (ANRESCRRDS). A compositionally biased stretch (polar residues) spans 331 to 362 (GCPNTQYPSNGTRTATLPRTGINKSGEQSCTE). The region spanning 438–744 (RGLVNCGNSC…GAYMLFYMRS (307 aa)) is the USP domain. The active-site Nucleophile is the Cys-447. His-703 functions as the Proton acceptor in the catalytic mechanism. Residues 750–793 (RGEHNGKAPVHHSQPRNEMKEQRKPVNRFKPRADHKNTESSSSE) are disordered. The segment covering 764 to 773 (PRNEMKEQRK) has biased composition (basic and acidic residues).

This sequence belongs to the peptidase C19 family. As to quaternary structure, interacts with DA1. Highly expressed in rosette leaves and inflorescence. Expressed at low levels in cotyledons, stems, cauline leaves and siliques.

It is found in the cytoplasm. The protein localises to the nucleus. The catalysed reaction is Thiol-dependent hydrolysis of ester, thioester, amide, peptide and isopeptide bonds formed by the C-terminal Gly of ubiquitin (a 76-residue protein attached to proteins as an intracellular targeting signal).. Its function is as follows. Recognizes and hydrolyzes the peptide bond at the C-terminal Gly of ubiquitin. Involved in the processing of poly-ubiquitin precursors as well as that of ubiquitinated proteins. Involved in the regulation of organ size. Acts as a positive regulator of cell proliferation. Possesses deubiquitinating enzyme activity in vitro. The enzyme activity of UBP15 is required for its function in regulation of cell proliferation. Functions antagonistically in a common pathway with DA1 to regulate seed size. Acts maternally to regulate seed size by promoting cell proliferation in the integuments of ovules and developing seeds. Functions independently of DA2 and BB. The polypeptide is Ubiquitin carboxyl-terminal hydrolase 15 (Arabidopsis thaliana (Mouse-ear cress)).